The chain runs to 314 residues: Acetylglutamate kinase (314 aa).

Substrate is bound by residues 76–77 (GG), Arg-98, and Asn-199.

It belongs to the acetylglutamate kinase family. ArgB subfamily.

The protein localises to the cytoplasm. It catalyses the reaction N-acetyl-L-glutamate + ATP = N-acetyl-L-glutamyl 5-phosphate + ADP. It participates in amino-acid biosynthesis; L-arginine biosynthesis; N(2)-acetyl-L-ornithine from L-glutamate: step 2/4. Its function is as follows. Catalyzes the ATP-dependent phosphorylation of N-acetyl-L-glutamate. This is Acetylglutamate kinase from Bifidobacterium longum (strain DJO10A).